Reading from the N-terminus, the 138-residue chain is Phospholipase A2 homolog (138 aa).

The first 16 residues, 1-16 (MRALWIVAVWLIGVEG), serve as a signal peptide directing secretion. Intrachain disulfides connect cysteine 42–cysteine 131, cysteine 44–cysteine 60, cysteine 59–cysteine 111, cysteine 65–cysteine 138, cysteine 66–cysteine 104, cysteine 73–cysteine 97, and cysteine 91–cysteine 102. Residues 121–133 (KKYTYYPNFLCKG) form an important for membrane-damaging activities in eukaryotes and bacteria; heparin-binding region.

Belongs to the phospholipase A2 family. Group II subfamily. S49 sub-subfamily. As to quaternary structure, monomer. Expressed by the venom gland.

It is found in the secreted. Snake venom phospholipase A2 homolog that lacks enzymatic activity. Shows high myotoxin activities and displays edema-inducing activities. Has cytotoxic activities against HUVEC cells (LC(50)=5.0 uL) and human lung adenocarcinoma A549 cells (LC(50)=5.2 uL). This Echis ocellatus (Ocellated saw-scaled viper) protein is Phospholipase A2 homolog.